A 236-amino-acid polypeptide reads, in one-letter code: Probable glutathione S-transferase GSTU6 (236 aa).

Positions 5–84 (GELKLLGVWS…YIDEVWPGGA (80 aa)) constitute a GST N-terminal domain. Glutathione contacts are provided by residues Ser-15, Lys-42, Val-56, and 68–69 (ES). Residues 94–228 (DPYERAVARF…KLLEFRQTLL (135 aa)) form the GST C-terminal domain.

It belongs to the GST superfamily. Tau family. As to expression, expressed in seedling shoots and roots.

It catalyses the reaction RX + glutathione = an S-substituted glutathione + a halide anion + H(+). Its function is as follows. Conjugation of reduced glutathione to a wide number of exogenous and endogenous hydrophobic electrophiles. The chain is Probable glutathione S-transferase GSTU6 (GSTU6) from Oryza sativa subsp. japonica (Rice).